The primary structure comprises 230 residues: Probable carboxylesterase Culp2 (230 aa).

Positions 1–32 (MNDLLTRRLLTMGAAAAMLAAVLLLTPITVPA) form a signal peptide, tat-type signal. The cysteines at positions 45 and 112 are disulfide-linked. The active-site Nucleophile is the Ser123. Cys185 and Cys192 are disulfide-bonded. Asp189 is an active-site residue. His207 (proton donor/acceptor) is an active-site residue.

It belongs to the cutinase family. In terms of processing, predicted to be exported by the Tat system. The position of the signal peptide cleavage has not been experimentally proven.

The protein localises to the secreted. The protein resides in the cell surface. This Mycobacterium bovis (strain ATCC BAA-935 / AF2122/97) protein is Probable carboxylesterase Culp2 (cut2).